The primary structure comprises 157 residues: Ribosome maturation factor RimP (157 aa).

The protein belongs to the RimP family.

The protein localises to the cytoplasm. Required for maturation of 30S ribosomal subunits. The sequence is that of Ribosome maturation factor RimP from Thermus thermophilus (strain ATCC BAA-163 / DSM 7039 / HB27).